The primary structure comprises 442 residues: Putative pyrimidine permease RutG (442 aa).

Residues 1 to 57 (MAMFGFPHWQLKSTSTESGVVAPDERLPFAQTAVMGVQHAVAMFGATVLMPILMGLD) are Cytoplasmic-facing. A helical membrane pass occupies residues 58 to 78 (PNLSILMSGIGTLLFFFITGG). Position 79 (Arg79) is a topological domain, periplasmic. The helical transmembrane segment at 80–100 (VPSYLGSSAAFVGVVIAATGF) threads the bilayer. Over 101 to 110 (NGQGINPNIS) the chain is Cytoplasmic. The chain crosses the membrane as a helical span at residues 111–131 (IALGGIIACGLVYTVIGLVVM). The Periplasmic segment spans residues 132–140 (KIGTRWIER). Residues 141 to 161 (LMPPVVTGAVVMAIGLNLAPI) traverse the membrane as a helical segment. Residues 162–169 (AVKSVSAS) are Cytoplasmic-facing. Residues 170–190 (AFDSWMAVMTVLCIGLVAVFT) form a helical membrane-spanning segment. At 191-196 (RGMIQR) the chain is on the periplasmic side. A helical transmembrane segment spans residues 197-217 (LLILVGLIVACLLYGVMTNVL). The Cytoplasmic portion of the chain corresponds to 218–240 (GLGKAVDFTLVSHAAWFGLPHFS). A helical transmembrane segment spans residues 241–261 (TPAFNGQAMMLIAPVAVILVA). The Periplasmic portion of the chain corresponds to 262-284 (ENLGHLKAVAGMTGRNMDPYMGR). A helical transmembrane segment spans residues 285–305 (AFVGDGLATMLSGSVGGSGVT). The Cytoplasmic segment spans residues 306–318 (TYAENIGVMAVTK). A helical membrane pass occupies residues 319–339 (VYSTLVFVAAAVIAMLLGFSP). At 340-347 (KFGALIHT) the chain is on the periplasmic side. A helical transmembrane segment spans residues 348–368 (IPAAVIGGASIVVFGLIAVAG). The Cytoplasmic segment spans residues 369–385 (ARIWVQNRVDLSQNGNL). 2 consecutive transmembrane segments (helical) span residues 386–406 (IMVAVTLVLGAGDFALTLGGF) and 407–427 (TLGGIGTATFGAILLNALLSR). Topologically, residues 428–442 (KLVDVPPPEVVHQEP) are cytoplasmic.

Belongs to the nucleobase:cation symporter-2 (NCS2) (TC 2.A.40) family.

It localises to the cell inner membrane. Its function is as follows. May function as a proton-driven pyrimidine uptake system. The sequence is that of Putative pyrimidine permease RutG (rutG) from Escherichia coli (strain K12).